Here is a 116-residue protein sequence, read N- to C-terminus: Large ribosomal subunit protein uL18 (116 aa).

This sequence belongs to the universal ribosomal protein uL18 family. Part of the 50S ribosomal subunit; part of the 5S rRNA/L5/L18/L25 subcomplex. Contacts the 5S and 23S rRNAs.

Its function is as follows. This is one of the proteins that bind and probably mediate the attachment of the 5S RNA into the large ribosomal subunit, where it forms part of the central protuberance. In Teredinibacter turnerae (strain ATCC 39867 / T7901), this protein is Large ribosomal subunit protein uL18.